The sequence spans 169 residues: Ribosome maturation factor RimM (169 aa).

One can recognise a PRC barrel domain in the interval 92-167 (PKDTYFICDI…YMKIKVVEGL (76 aa)).

It belongs to the RimM family. In terms of assembly, binds ribosomal protein uS19.

It localises to the cytoplasm. In terms of biological role, an accessory protein needed during the final step in the assembly of 30S ribosomal subunit, possibly for assembly of the head region. Essential for efficient processing of 16S rRNA. May be needed both before and after RbfA during the maturation of 16S rRNA. It has affinity for free ribosomal 30S subunits but not for 70S ribosomes. This chain is Ribosome maturation factor RimM, found in Caldicellulosiruptor bescii (strain ATCC BAA-1888 / DSM 6725 / KCTC 15123 / Z-1320) (Anaerocellum thermophilum).